Consider the following 70-residue polypeptide: Protein SlyX homolog (70 aa).

It belongs to the SlyX family.

This chain is Protein SlyX homolog, found in Shewanella sediminis (strain HAW-EB3).